A 158-amino-acid chain; its full sequence is EOLA-like protein (158 aa).

An ASCH domain is found at 6–92; the sequence is LSFRQPYAGF…IAGLVDIGET (87 aa).

It belongs to the EOLA family.

This is EOLA-like protein from Pongo abelii (Sumatran orangutan).